The primary structure comprises 793 residues: Transcription factor castor (793 aa).

The span at 44 to 53 (NEDISSSTSV) shows a compositional bias: polar residues. 3 disordered regions span residues 44–101 (NEDI…NLIA), 199–259 (VTST…HTNA), and 272–296 (LEST…DSSY). Composition is skewed to low complexity over residues 54–68 (QQQQ…QQPQ), 81–98 (SSQN…PNSN), and 210–221 (ATPAPSAGATAG). Position 211 is a phosphothreonine (T211). S215 is subject to Phosphoserine. A compositionally biased stretch (acidic residues) spans 233 to 242 (ESADDDEDDD). Residues 245 to 254 (LSSLTSCSSS) show a composition bias toward low complexity. The segment covering 273–284 (ESTTDSLDSPSM) has biased composition (polar residues). Residues 377-402 (FHCHEEPCQGKILSKKDDIIRHLKWH) form a C2H2-type 1; atypical zinc finger. 3 consecutive C2H2-type zinc fingers follow at residues 439 to 463 (YHCV…ANFH), 498 to 522 (YHCC…KTYH), and 556 to 580 (IHCV…KRKH). Positions 599–682 (EESSLDAMPQ…RLKVEDESSN (84 aa)) are disordered. Residues 608–629 (QQQQQQQQQQPTSLSQSQSSSS) show a composition bias toward low complexity. Residues 630-644 (VCGGSNTSTPLSSLS) show a composition bias toward polar residues. A DNA-binding region (a.T hook) is located at residues 650–662 (ARKRGRPPKKIQL).

Expressed in a specific subset of neuroblasts in the ventral nerve cord and the procephalic region in the embryo. Expressed in many, if not all, late delaminating NBs, and in early NBs, but only after they have undergone several rounds of ganglion mother cell-producing divisions.

It localises to the nucleus. Transcription factor that specifies expression of key genes in developing central nervous system (CNS). Essential for many, if not all, late developing neuroblastoma (NB) sublineages. Binds to the 5'-[CG]C[CT][CT]AAAAA[AT]-3' DNA sequence, like hb, suggesting that cas and hb act as a late regulators in early and late CNS NB sublineage, respectively. Acts by repressing expression of nub/pdm-1 and pdm2/pdm-2 POU genes, and restrict their pattern of expression in appropriate cells. Required for a full expression of vvl/drifter and acj6/I-POU; it is however unknown whether it directly activates these genes. Controls engrailed (en) expression in the ventral nerve cord. This chain is Transcription factor castor (cas), found in Drosophila melanogaster (Fruit fly).